A 114-amino-acid chain; its full sequence is Protein 4 (114 aa).

In Hordeum vulgare (Barley), this protein is Protein 4 (4).